A 118-amino-acid polypeptide reads, in one-letter code: T cell receptor gamma variable 4 (118 aa).

An N-terminal signal peptide occupies residues 1 to 17 (MQWALAVLLAFLSPASQ). The Ig-like domain occupies 18–118 (KSSNLEGRTK…GVYYCATWDG (101 aa)). A disulfide bridge links Cys-41 with Cys-113. A glycan (N-linked (GlcNAc...) asparagine) is linked at Asn-106.

In terms of assembly, gamma-delta TR is a heterodimer composed of a gamma and delta chain; disulfide-linked. The gamma-delta TR is associated with the transmembrane signaling CD3 coreceptor proteins following the stoichiometry: a single gamma-delta TR heterodimer associates with one CD3D-CD3E heterodimer, one CD3G-CD3E heterodimer and one CD247 homodimer forming a stable octameric structure. Upon activation, gamma-delta TR complex associates with FCER1G to initiate intracellular signaling.

Its subcellular location is the cell membrane. In terms of biological role, v region of the variable domain of T cell receptor (TR) gamma chain that participates in the antigen recognition. Gamma-delta TRs recognize a variety of self and foreign non-peptide antigens frequently expressed at the epithelial boundaries between the host and external environment, including endogenous lipids presented by MH-like protein CD1D and phosphoantigens presented by butyrophilin-like molecule BTN3A1. Upon antigen recognition induces rapid, innate-like immune responses involved in pathogen clearance and tissue repair. Binding of gamma-delta TR complex to antigen triggers phosphorylation of immunoreceptor tyrosine-based activation motifs (ITAMs) in the CD3 chains by the LCK and FYN kinases, allowing the recruitment, phosphorylation, and activation of ZAP70 that facilitates phosphorylation of the scaffolding proteins LCP2 and LAT. This lead to the formation of a supramolecular signalosome that recruits the phospholipase PLCG1, resulting in calcium mobilization and ERK activation, ultimately leading to T cell expansion and differentiation into effector cells. Gamma-delta TRs are produced through somatic rearrangement of a limited repertoire of variable (V), diversity (D), and joining (J) genes. The potential diversity of gamma-delta TRs is conferred by the unique ability to rearrange (D) genes in tandem and to utilize all three reading frames. The combinatorial diversity is considerably increased by the sequence exonuclease trimming and random nucleotide (N) region additions which occur during the V-(D)-J rearrangements. The chain is T cell receptor gamma variable 4 from Homo sapiens (Human).